The following is a 352-amino-acid chain: DNA-directed RNA polymerase subunit alpha (352 aa).

The alpha N-terminal domain (alpha-NTD) stretch occupies residues 1–226 (MLISQRPTLT…ELFGLARELN (226 aa)). An alpha C-terminal domain (alpha-CTD) region spans residues 243 to 352 (HIASFGLPIE…EQDYAETEQL (110 aa)). The tract at residues 324-352 (DASTGTWSDSGTFSDNDGGEQDYAETEQL) is disordered. A compositionally biased stretch (polar residues) spans 326–338 (STGTWSDSGTFSD). The span at 340-352 (DGGEQDYAETEQL) shows a compositional bias: acidic residues.

The protein belongs to the RNA polymerase alpha chain family. As to quaternary structure, homodimer. The RNAP catalytic core consists of 2 alpha, 1 beta, 1 beta' and 1 omega subunit. When a sigma factor is associated with the core the holoenzyme is formed, which can initiate transcription.

The catalysed reaction is RNA(n) + a ribonucleoside 5'-triphosphate = RNA(n+1) + diphosphate. Its function is as follows. DNA-dependent RNA polymerase catalyzes the transcription of DNA into RNA using the four ribonucleoside triphosphates as substrates. The chain is DNA-directed RNA polymerase subunit alpha from Nocardia farcinica (strain IFM 10152).